A 596-amino-acid chain; its full sequence is UvrABC system protein C (596 aa).

Residues 14-91 enclose the GIY-YIG domain; that stretch reads DQPGCYLMKD…IKLHDPKYNV (78 aa). Residues 196–231 enclose the UVR domain; it reads EAVKKELEVKMLAAAENLEFERAKEFRDQIAHIDTV.

It belongs to the UvrC family. As to quaternary structure, interacts with UvrB in an incision complex.

The protein localises to the cytoplasm. Its function is as follows. The UvrABC repair system catalyzes the recognition and processing of DNA lesions. UvrC both incises the 5' and 3' sides of the lesion. The N-terminal half is responsible for the 3' incision and the C-terminal half is responsible for the 5' incision. This chain is UvrABC system protein C, found in Lysinibacillus sphaericus (strain C3-41).